A 194-amino-acid chain; its full sequence is IMP cyclohydrolase (194 aa).

Belongs to the archaeal IMP cyclohydrolase family.

It catalyses the reaction IMP + H2O = 5-formamido-1-(5-phospho-D-ribosyl)imidazole-4-carboxamide. It functions in the pathway purine metabolism; IMP biosynthesis via de novo pathway; IMP from 5-formamido-1-(5-phospho-D-ribosyl)imidazole-4-carboxamide: step 1/1. Its function is as follows. Catalyzes the cyclization of 5-formylamidoimidazole-4-carboxamide ribonucleotide to IMP. In Halobacterium salinarum (strain ATCC 29341 / DSM 671 / R1), this protein is IMP cyclohydrolase.